A 252-amino-acid chain; its full sequence is Large ribosomal subunit protein uL29m (252 aa).

At Lys146 the chain carries N6-acetyllysine. The segment covering 230-240 (KKKEKILHAKF) has biased composition (basic residues). The interval 230–252 (KKKEKILHAKFPHLSQERKSSSV) is disordered.

The protein belongs to the universal ribosomal protein uL29 family. As to quaternary structure, component of the mitochondrial ribosome large subunit (39S) which comprises a 16S rRNA and about 50 distinct proteins.

It is found in the mitochondrion. The protein is Large ribosomal subunit protein uL29m (Mrpl47) of Mus musculus (Mouse).